The following is a 353-amino-acid chain: ATP-dependent kinase YFH7 (353 aa).

31 to 39 (GSPGSGKST) serves as a coordination point for ATP.

Belongs to the YFH7 family.

ATP-dependent kinase that could be involved in endoplasmic reticulum membrane assembly. The sequence is that of ATP-dependent kinase YFH7 (YFH7) from Saccharomyces cerevisiae (strain RM11-1a) (Baker's yeast).